We begin with the raw amino-acid sequence, 469 residues long: ATP-dependent protease ATPase subunit HslU (469 aa).

Residues Ile-24, 66 to 71 (GVGKTE), Asp-282, Glu-347, and Arg-419 contribute to the ATP site.

This sequence belongs to the ClpX chaperone family. HslU subfamily. In terms of assembly, a double ring-shaped homohexamer of HslV is capped on each side by a ring-shaped HslU homohexamer. The assembly of the HslU/HslV complex is dependent on binding of ATP.

It is found in the cytoplasm. ATPase subunit of a proteasome-like degradation complex; this subunit has chaperone activity. The binding of ATP and its subsequent hydrolysis by HslU are essential for unfolding of protein substrates subsequently hydrolyzed by HslV. HslU recognizes the N-terminal part of its protein substrates and unfolds these before they are guided to HslV for hydrolysis. In Listeria monocytogenes serotype 4a (strain HCC23), this protein is ATP-dependent protease ATPase subunit HslU.